The sequence spans 308 residues: MPPDREEAGRRPAAILIAGPTASGKSALAARLAERHGGVVINTDSMQVYADLRRLTARPDPDEEARVPHRLYGHVDGAVNYSAGHFSRDAAALLATLGGRLPVFVGGTGLYFRALEQGFSELPPVPDTVRARVRDAAEGRPTEALHADLARHDPEGAARLRPSDRMRVMRALEIFLATGRPIASFYGDPVPGPLAGRDLRRIFLAPDRAALRERIDARFRTMIAEGALDEVARLRARRLDPMLPVMRAHGVPGLIAHLDGALSLDEAIARGQADTRAYAKRQLTWFRHQMGEAWRWVDPEGATVEDLL.

19-26 (GPTASGKS) lines the ATP pocket. Position 21–26 (21–26 (TASGKS)) interacts with substrate. Positions 44-47 (DSMQ) are interaction with substrate tRNA.

This sequence belongs to the IPP transferase family. Monomer. The cofactor is Mg(2+).

It carries out the reaction adenosine(37) in tRNA + dimethylallyl diphosphate = N(6)-dimethylallyladenosine(37) in tRNA + diphosphate. Catalyzes the transfer of a dimethylallyl group onto the adenine at position 37 in tRNAs that read codons beginning with uridine, leading to the formation of N6-(dimethylallyl)adenosine (i(6)A). This Methylobacterium radiotolerans (strain ATCC 27329 / DSM 1819 / JCM 2831 / NBRC 15690 / NCIMB 10815 / 0-1) protein is tRNA dimethylallyltransferase.